Consider the following 196-residue polypeptide: Auxin-induced protein 22B (196 aa).

Residues 18 to 22 (LRLGL) carry the EAR-like (transcriptional repression) motif. The tract at residues 44–74 (RQVRETSQDSVSISKASHHQQHVETVSAPPP) is disordered. In terms of domain architecture, PB1 spans 99-186 (GIFVKVSMDG…SCKRLRIMKG (88 aa)).

This sequence belongs to the Aux/IAA family. Homodimers and heterodimers.

The protein localises to the nucleus. Aux/IAA proteins are short-lived transcriptional factors that function as repressors of early auxin response genes at low auxin concentrations. Repression is thought to result from the interaction with auxin response factors (ARFs), proteins that bind to the auxin-responsive promoter element (AuxRE). Formation of heterodimers with ARF proteins may alter their ability to modulate early auxin response genes expression. This Vigna radiata var. radiata (Mung bean) protein is Auxin-induced protein 22B (AUX22B).